The following is a 489-amino-acid chain: MNLRDISGNAFPELKELLLSEIGAIEIGGITADSRKAAPGSLFVAVAGTKADGAAYVKDAVAKGAVAVVSGHAVEADVPVLVVTDPRLYLSLAASRFYGKQPDTMVAVTGTAGKTSVASFVRQIWAFAGHAAAQIGTTGVIAPGREDYGALTTPDPVTLHALLAELASEGVTHAAMEASSHGLDQRRLDGVHLSAAGFTNLGRDHMDYHPTIEDYMAAKMRLFDTLMEKGAPAVIFADDPWSDKAIGAAREAGLEVRTVGRNGQYLTLKRVEHFRHKQMIEVHHDGVIFEVDIPLAGDFQVANALVAAGLAMSTGVPAATALKALEKLVGAAGRLELVGQTKNGALAYVDYAHKPDALENVLTSVRPFTSGRIITVFGCGGDRDKGKRPIMGEVATRLSDIVIVTDDNPRSEDAATIRSEVMAAAAGALEIGDRAEAIRHAVSMLSHGDTLIVAGKGHEEGQIVGSVTLPFSDHEQVRSALAELEGSKI.

Position 34 (serine 34) interacts with UDP-N-acetyl-alpha-D-muramoyl-L-alanyl-D-glutamate. Residue 110-116 coordinates ATP; the sequence is GTAGKTS. UDP-N-acetyl-alpha-D-muramoyl-L-alanyl-D-glutamate is bound by residues 152-153, serine 179, glutamine 185, and arginine 187; that span reads TT. The residue at position 219 (lysine 219) is an N6-carboxylysine. Residues arginine 383, 407-410, glycine 455, and glutamate 459 contribute to the meso-2,6-diaminopimelate site; that span reads DNPR. Positions 407-410 match the Meso-diaminopimelate recognition motif motif; the sequence is DNPR.

This sequence belongs to the MurCDEF family. MurE subfamily. The cofactor is Mg(2+). In terms of processing, carboxylation is probably crucial for Mg(2+) binding and, consequently, for the gamma-phosphate positioning of ATP.

The protein resides in the cytoplasm. It catalyses the reaction UDP-N-acetyl-alpha-D-muramoyl-L-alanyl-D-glutamate + meso-2,6-diaminopimelate + ATP = UDP-N-acetyl-alpha-D-muramoyl-L-alanyl-gamma-D-glutamyl-meso-2,6-diaminopimelate + ADP + phosphate + H(+). The protein operates within cell wall biogenesis; peptidoglycan biosynthesis. Functionally, catalyzes the addition of meso-diaminopimelic acid to the nucleotide precursor UDP-N-acetylmuramoyl-L-alanyl-D-glutamate (UMAG) in the biosynthesis of bacterial cell-wall peptidoglycan. The chain is UDP-N-acetylmuramoyl-L-alanyl-D-glutamate--2,6-diaminopimelate ligase from Agrobacterium fabrum (strain C58 / ATCC 33970) (Agrobacterium tumefaciens (strain C58)).